Here is a 226-residue protein sequence, read N- to C-terminus: RPA-interacting protein A (226 aa).

The interval 1–45 (MEAERRHRALYKGTTPPWKETYRKRCVERLKRNRSKLLDKFRQVG) is interaction with importin beta. The tract at residues 49–171 (HGGVGGSFLV…QCGVYINTQS (123 aa)) is interaction with RPA1. An RIP-type zinc finger spans residues 144 to 219 (CPVCNRNYLT…ASLFMSCQEC (76 aa)).

In terms of assembly, interacts directly with the rpa1 subunit of RPA complex. Interacts with importin beta, but not with importin alpha. Forms a complex with the RPA complex and importin beta, which is dissociated by Ran-GTP.

It localises to the nucleus. Mediates the import of RPA complex into the nucleus, via its interaction with importin beta. This Xenopus laevis (African clawed frog) protein is RPA-interacting protein A (rpain-a).